Here is a 109-residue protein sequence, read N- to C-terminus: uncharacterized protein (109 aa).

The stretch at 27–89 (KEEAHQFRDK…LKRIDELIAV (63 aa)) forms a coiled coil.

This is an uncharacterized protein from Streptococcus pneumoniae.